Reading from the N-terminus, the 283-residue chain is MINIPNSIRPFIRSANRTPCYLRSISSSSSSSFATPAEEHAGKQPSSAVPVKEFSIYRWNPDEPSKKPTLQTYSIDLKKCGPMVLDALIKIKNELDPTLTFRRSCREGICGSCAMNIDGVNTLACLKRINKETSAPVKIYPLPHMYIIKDLVPDMTHFYKQYKSIEPFLKNDNPPAQGEFLQSPEDRKKLDGMYECILCACCSTSCPSYWWNQDEYLGPAVLMQAYRWMADSRDSYGEDRKEKLQNTLSLYRCHTIFNCTKTCPKGLNPAKAISHIKREMASA.

Residues 66-145 (KKPTLQTYSI…PVKIYPLPHM (80 aa)) form the 2Fe-2S ferredoxin-type domain. The [2Fe-2S] cluster site is built by C105, C110, C113, and C125. The region spanning 186 to 216 (DRKKLDGMYECILCACCSTSCPSYWWNQDEY) is the 4Fe-4S ferredoxin-type domain. C196, C199, and C202 together coordinate [4Fe-4S] cluster. A [3Fe-4S] cluster-binding site is contributed by C206. W211 contacts a ubiquinone. Residues C253 and C259 each coordinate [3Fe-4S] cluster. C263 is a [4Fe-4S] cluster binding site.

It belongs to the succinate dehydrogenase/fumarate reductase iron-sulfur protein family. Component of complex II composed of four subunits: a flavoprotein (FP), an iron-sulfur protein (IP), and a cytochrome b composed of a large and a small subunit. The cofactor is [2Fe-2S] cluster. [3Fe-4S] cluster serves as cofactor. Requires [4Fe-4S] cluster as cofactor.

It is found in the mitochondrion inner membrane. It carries out the reaction a quinone + succinate = fumarate + a quinol. The protein operates within carbohydrate metabolism; tricarboxylic acid cycle; fumarate from succinate (eukaryal route): step 1/1. In terms of biological role, iron-sulfur protein (IP) subunit of succinate dehydrogenase (SDH) that is involved in complex II of the mitochondrial electron transport chain and is responsible for transferring electrons from succinate to ubiquinone (coenzyme Q). The polypeptide is Succinate dehydrogenase [ubiquinone] iron-sulfur subunit, mitochondrial (SDH2) (Uromyces fabae (Rust fungus)).